A 166-amino-acid polypeptide reads, in one-letter code: ATP synthase subunit b 1 (166 aa).

A helical transmembrane segment spans residues 7 to 29; that stretch reads FWTALAFVLFFVIFGRKLWVAIT.

The protein belongs to the ATPase B chain family. In terms of assembly, F-type ATPases have 2 components, F(1) - the catalytic core - and F(0) - the membrane proton channel. F(1) has five subunits: alpha(3), beta(3), gamma(1), delta(1), epsilon(1). F(0) has three main subunits: a(1), b(2) and c(10-14). The alpha and beta chains form an alternating ring which encloses part of the gamma chain. F(1) is attached to F(0) by a central stalk formed by the gamma and epsilon chains, while a peripheral stalk is formed by the delta and b chains.

Its subcellular location is the cell inner membrane. Functionally, f(1)F(0) ATP synthase produces ATP from ADP in the presence of a proton or sodium gradient. F-type ATPases consist of two structural domains, F(1) containing the extramembraneous catalytic core and F(0) containing the membrane proton channel, linked together by a central stalk and a peripheral stalk. During catalysis, ATP synthesis in the catalytic domain of F(1) is coupled via a rotary mechanism of the central stalk subunits to proton translocation. In terms of biological role, component of the F(0) channel, it forms part of the peripheral stalk, linking F(1) to F(0). This is ATP synthase subunit b 1 from Gluconobacter oxydans (strain 621H) (Gluconobacter suboxydans).